Reading from the N-terminus, the 158-residue chain is Small ribosomal subunit protein uS7 (158 aa).

Belongs to the universal ribosomal protein uS7 family. In terms of assembly, part of the 30S ribosomal subunit. Contacts proteins S9 and S11.

Its function is as follows. One of the primary rRNA binding proteins, it binds directly to 16S rRNA where it nucleates assembly of the head domain of the 30S subunit. Is located at the subunit interface close to the decoding center, probably blocks exit of the E-site tRNA. This chain is Small ribosomal subunit protein uS7, found in Acidiphilium cryptum (strain JF-5).